A 264-amino-acid chain; its full sequence is Thymidylate synthase (264 aa).

Position 21 (R21) interacts with dUMP. Residue H51 coordinates (6R)-5,10-methylene-5,6,7,8-tetrahydrofolate. 126-127 (RR) is a dUMP binding site. Residue C146 is the Nucleophile of the active site. Residues 166–169 (RSCD), N177, and 207–209 (HLY) each bind dUMP. D169 is a binding site for (6R)-5,10-methylene-5,6,7,8-tetrahydrofolate. A263 contributes to the (6R)-5,10-methylene-5,6,7,8-tetrahydrofolate binding site.

The protein belongs to the thymidylate synthase family. Bacterial-type ThyA subfamily. Homodimer.

Its subcellular location is the cytoplasm. The enzyme catalyses dUMP + (6R)-5,10-methylene-5,6,7,8-tetrahydrofolate = 7,8-dihydrofolate + dTMP. It functions in the pathway pyrimidine metabolism; dTTP biosynthesis. Catalyzes the reductive methylation of 2'-deoxyuridine-5'-monophosphate (dUMP) to 2'-deoxythymidine-5'-monophosphate (dTMP) while utilizing 5,10-methylenetetrahydrofolate (mTHF) as the methyl donor and reductant in the reaction, yielding dihydrofolate (DHF) as a by-product. This enzymatic reaction provides an intracellular de novo source of dTMP, an essential precursor for DNA biosynthesis. The polypeptide is Thymidylate synthase (Salmonella typhi).